The following is a 562-amino-acid chain: Probable tRNA (uracil-O(2)-)-methyltransferase (562 aa).

The interval 520-546 (VSRRQQTNPKKQEATNRPKQPCWMSLN) is disordered. The C3H1-type zinc finger occupies 535–562 (NRPKQPCWMSLNHPDGCPLGPESCRYLH).

The protein belongs to the TRM44 family.

It localises to the cytoplasm. The catalysed reaction is uridine(44) in tRNA(Ser) + S-adenosyl-L-methionine = 2'-O-methyluridine(44) in tRNA(Ser) + S-adenosyl-L-homocysteine + H(+). Probable adenosyl-L-methionine (AdoMet)-dependent tRNA (uracil-O(2)-)-methyltransferase. The polypeptide is Probable tRNA (uracil-O(2)-)-methyltransferase (Caenorhabditis briggsae).